Consider the following 214-residue polypeptide: A-type ATP synthase subunit D (214 aa).

This sequence belongs to the V-ATPase D subunit family. In terms of assembly, has multiple subunits with at least A(3), B(3), C, D, E, F, H, I and proteolipid K(x).

It is found in the cell membrane. In terms of biological role, component of the A-type ATP synthase that produces ATP from ADP in the presence of a proton gradient across the membrane. This chain is A-type ATP synthase subunit D, found in Pyrococcus horikoshii (strain ATCC 700860 / DSM 12428 / JCM 9974 / NBRC 100139 / OT-3).